The sequence spans 316 residues: Epoxide hydrolase 3 (316 aa).

The AB hydrolase-1 domain maps to 25–302 (PVVLLLHGFP…ACHFINQERP (278 aa)). Asp-101 acts as the Nucleophile in catalysis. Tyr-150 provides a ligand contact to an epoxide. Tyr-230 functions as the Proton donor in the catalytic mechanism. Catalysis depends on His-295, which acts as the Proton acceptor.

The protein belongs to the AB hydrolase superfamily. Epoxide hydrolase family. Homodimer. Highly expressed in young fruits 15 days after anthesis (15-DAA).

It carries out the reaction an epoxide + H2O = an ethanediol. The catalysed reaction is (24S)-24,25-epoxycucurbitadienol + H2O = (24R)-24,25-dihydroxycucurbitadienol. Its pathway is secondary metabolite biosynthesis; terpenoid biosynthesis. In terms of biological role, epoxide hydrolase involved in the biosynthesis of cucurbitacin and mogroside tetracyclic triterpene natural products (e.g. siamenoside I and mogrosides IV, V and VI). Cucurbitacins have cytotoxic properties and exhibit deterrent taste as a defense barrier against herbivores. Mogrosides are nonsugar highly oxygenated compounds used as high-intensity zero-calorie sweeteners; they also possess pharmacological properties such as regulating immunity, lowering blood sugar and lipid levels, protecting the liver, and acting as antioxidants and antitumor agents. Catalyzes the hydrolysis of aromatic epoxide-containing substrates, such as the conversion of 24,25-epoxycucurbitadienol to 24,25-dihydroxycucurbitadienol. This Siraitia grosvenorii (Monk's fruit) protein is Epoxide hydrolase 3.